Here is a 346-residue protein sequence, read N- to C-terminus: Sugar utilization regulatory protein IMP2 (346 aa).

Residues 1 to 29 (MQKSILLTKPDGTQSNLHSIKTETPTTVE) are compositionally biased toward polar residues. 2 disordered regions span residues 1–74 (MQKS…RVRE) and 91–132 (LRVV…DIEN). Residue Thr24 is modified to Phosphothreonine. The span at 40–49 (RERGRSKKKR) shows a compositional bias: basic residues. The span at 96–132 (VDSEEEGEGNDEDDDDGDGDDMDEEESDEEQVSDIEN) shows a compositional bias: acidic residues.

Functionally, controls the nucleo-mitochondrial dependence of galactose, maltose and raffinose utilization. Becomes essential in the absence of functioning mitochondria. The protein is Sugar utilization regulatory protein IMP2 (IMP2') of Saccharomyces cerevisiae (strain ATCC 204508 / S288c) (Baker's yeast).